A 110-amino-acid polypeptide reads, in one-letter code: Small ribosomal subunit protein bS16 (110 aa).

Positions 84 to 110 (KRTARNNPEKAVPRKERKAQAEAAAKS) are disordered. Basic and acidic residues predominate over residues 90 to 103 (NPEKAVPRKERKAQ).

It belongs to the bacterial ribosomal protein bS16 family.

The protein is Small ribosomal subunit protein bS16 of Nitrobacter hamburgensis (strain DSM 10229 / NCIMB 13809 / X14).